Consider the following 363-residue polypeptide: Cytoplasmic envelopment protein 2 (363 aa).

Belongs to the herpesviridae cytoplasmic envelopment protein 2 family. Interacts with cytoplasmic envelopment protein 3 and with the capsid.

The protein localises to the virion tegument. It is found in the host cytoplasm. The protein resides in the host nucleus. Plays a critical role in cytoplasmic virus egress. Participates in the final step of tegumentation and envelope acquisition within the host cytoplasm by directly interacting with the capsid. Upon virion binding to target cell, a signaling cascade is triggered to disrupt the interaction with the capsid, thereby preparing capsid uncoating. This Varicella-zoster virus (strain Dumas) (HHV-3) protein is Cytoplasmic envelopment protein 2 (44).